The sequence spans 304 residues: Plasmodesmata-located protein 3 (304 aa).

An N-terminal signal peptide occupies residues 1-26 (MGFYSLKQLLLLYIIIMALFSDLKLA). The Extracellular portion of the chain corresponds to 27 to 272 (KSSSPEYTNL…SSSSGTTGKT (246 aa)). Gnk2-homologous domains lie at 34–138 (TNLI…ISGF) and 143–242 (GMEL…FYPN). Cystine bridges form between Cys41/Cys116, Cys92/Cys101, Cys104/Cys129, Cys151/Cys220, Cys196/Cys205, and Cys208/Cys233. The chain crosses the membrane as a helical span at residues 273–293 (VAIIVGGTAGVGFLVICLLFV). The tract at residues 273–293 (VAIIVGGTAGVGFLVICLLFV) is necessary and sufficient for plasmodesmal targeting. Residues 294–304 (KNLMKKKYDDY) are Cytoplasmic-facing.

Belongs to the cysteine-rich repeat secretory protein family. Plasmodesmata-located proteins (PDLD) subfamily. In terms of assembly, (Microbial infection) Interacts with Grapevine fanleaf virus (GFLV) 2B-MP. As to expression, highly expressed in inflorescence pedacel and shoot apex. Expressed in the outermost L1 layer of the shoot apical meristem and in the epidermis of bulging floral primordia. Within the L1, expression was restricted to the peripheral zone (at protein level).

The protein localises to the cell membrane. It is found in the cell junction. The protein resides in the plasmodesma. Its function is as follows. Modulates cell-to-cell trafficking. The protein is Plasmodesmata-located protein 3 of Arabidopsis thaliana (Mouse-ear cress).